A 155-amino-acid polypeptide reads, in one-letter code: MAPK regulated corepressor interacting protein 2 (155 aa).

Met1 carries the post-translational modification N-acetylmethionine. The interval 1–59 (MYTITKGPSKLVAQRRTGPTQQQVESRLGELLKCRHSAPTPQHPRAQPPGPWPLSSPGP) is disordered. Arg35 bears the Omega-N-methylarginine mark. The segment covering 46 to 56 (AQPPGPWPLSS) has biased composition (pro residues). Position 56 is a phosphoserine (Ser56). The residue at position 60 (Arg60) is an Omega-N-methylarginine. Residue Ser77 is modified to Phosphoserine.

The protein belongs to the MCRIP family. In terms of assembly, interacts with DDX6. Interacts with MCRIP1.

The protein resides in the cytoplasm. It localises to the stress granule. It is found in the nucleus. This chain is MAPK regulated corepressor interacting protein 2 (MCRIP2), found in Bos taurus (Bovine).